The primary structure comprises 297 residues: Formamidopyrimidine-DNA glycosylase (297 aa).

Pro-2 serves as the catalytic Schiff-base intermediate with DNA. The Proton donor role is filled by Glu-3. Lys-61 (proton donor; for beta-elimination activity) is an active-site residue. DNA is bound by residues Arg-120 and Arg-176. An FPG-type zinc finger spans residues 262–296 (HVYGRQGQPCDRCGTAIVRESFMNRGSHFCPRCQR). Arg-286 (proton donor; for delta-elimination activity) is an active-site residue.

The protein belongs to the FPG family. As to quaternary structure, monomer. Zn(2+) is required as a cofactor.

The enzyme catalyses Hydrolysis of DNA containing ring-opened 7-methylguanine residues, releasing 2,6-diamino-4-hydroxy-5-(N-methyl)formamidopyrimidine.. The catalysed reaction is 2'-deoxyribonucleotide-(2'-deoxyribose 5'-phosphate)-2'-deoxyribonucleotide-DNA = a 3'-end 2'-deoxyribonucleotide-(2,3-dehydro-2,3-deoxyribose 5'-phosphate)-DNA + a 5'-end 5'-phospho-2'-deoxyribonucleoside-DNA + H(+). In terms of biological role, involved in base excision repair of DNA damaged by oxidation or by mutagenic agents. Acts as a DNA glycosylase that recognizes and removes damaged bases. Has a preference for oxidized purines, such as 7,8-dihydro-8-oxoguanine (8-oxoG). Has AP (apurinic/apyrimidinic) lyase activity and introduces nicks in the DNA strand. Cleaves the DNA backbone by beta-delta elimination to generate a single-strand break at the site of the removed base with both 3'- and 5'-phosphates. This chain is Formamidopyrimidine-DNA glycosylase, found in Leifsonia xyli subsp. xyli (strain CTCB07).